The sequence spans 442 residues: MDLYRKAKRLKKELSKHEEINDSLKELAFDIFKELTVKPEFIDKNTNDVIGEEKINTSTFSNKERLDILIEWTIEIDPILSFIIDKCDIPIERTGGDDLDAFMENVYTEYIEELHKLPNRKSFDSSKITKIESFAQQITKTIELYLDGYVHLAYAEFDKGMNIFSEEVNIEELLLYNIDSIRIPCKFFRMRTSNTEVFSKDDMFHIPFEKRGIIRTNRFSIPGFPCLYLGSSSLVCWEELGRPDLNTTYTSVFHLEDEDIKILDLSVSPTELADNLKKFFEITFRRKIYKFNAYFMTWILISACLIRVKKQKDIFKPEYIIPQFLLEWVKQTESSEYWGICYLSSKINRQTIENYKLYKNYAIPVRQRKDSGHCSLLGETFQISDPVAWETFQSHKDSPESLPIKNPLFPETEGTHHDYHKTELGRLEAFLIRYRSVVKDQL.

It in the C-terminal section; belongs to the MbcT/ParT/Res family. As to quaternary structure, forms a complex with cognate antitoxin YopB.

Functionally, may be the toxic component of a type II toxin-antitoxin (TA) system. Neutralized by its cognate antitoxin YopB. This Bacillus subtilis (strain 168) protein is Putative toxin YopC (yopC).